The primary structure comprises 80 residues: Bowman-Birk type proteinase inhibitor (80 aa).

7 disulfides stabilise this stretch: cysteine 19/cysteine 70, cysteine 20/cysteine 35, cysteine 23/cysteine 66, cysteine 25/cysteine 33, cysteine 41/cysteine 47, cysteine 44/cysteine 59, and cysteine 49/cysteine 57.

Occurs as a monomer, dimer or trimer. The dimer may be the active form. Post-translationally, binds calcium, probably through His-3 to His-6.

Protease inhibitor with activity against cysteine, aspartic and serine proteases. Highest activity against serine proteases, in particular trypsin and trypsin-like proteases. The sequence is that of Bowman-Birk type proteinase inhibitor from Phaseolus acutifolius (Tepary bean).